The chain runs to 156 residues: Small ribosomal subunit protein uS7 (156 aa).

This sequence belongs to the universal ribosomal protein uS7 family. Part of the 30S ribosomal subunit. Contacts proteins S9 and S11.

One of the primary rRNA binding proteins, it binds directly to 16S rRNA where it nucleates assembly of the head domain of the 30S subunit. Is located at the subunit interface close to the decoding center, probably blocks exit of the E-site tRNA. The chain is Small ribosomal subunit protein uS7 from Mannheimia succiniciproducens (strain KCTC 0769BP / MBEL55E).